Here is a 398-residue protein sequence, read N- to C-terminus: Acetate kinase (398 aa).

Asparagine 8 contributes to the Mg(2+) binding site. ATP is bound at residue lysine 15. Residue arginine 90 coordinates substrate. Catalysis depends on aspartate 147, which acts as the Proton donor/acceptor. Residues 207–211, 282–284, and 330–334 each bind ATP; these read HIGAG, DMR, and GVGEN. A Mg(2+)-binding site is contributed by glutamate 383.

It belongs to the acetokinase family. Homodimer. Mg(2+) serves as cofactor. It depends on Mn(2+) as a cofactor.

It localises to the cytoplasm. The enzyme catalyses acetate + ATP = acetyl phosphate + ADP. Its pathway is metabolic intermediate biosynthesis; acetyl-CoA biosynthesis; acetyl-CoA from acetate: step 1/2. Its function is as follows. Catalyzes the formation of acetyl phosphate from acetate and ATP. Can also catalyze the reverse reaction. This Limosilactobacillus fermentum (strain NBRC 3956 / LMG 18251) (Lactobacillus fermentum) protein is Acetate kinase.